Consider the following 67-residue polypeptide: Large ribosomal subunit protein uL29 (67 aa).

Belongs to the universal ribosomal protein uL29 family.

This Ehrlichia canis (strain Jake) protein is Large ribosomal subunit protein uL29.